A 252-amino-acid polypeptide reads, in one-letter code: Ureidoacrylate amidohydrolase RutB (252 aa).

The segment covering 1 to 14 has biased composition (polar residues); that stretch reads MSTPARNTTLTSNT. Residues 1–31 are disordered; the sequence is MSTPARNTTLTSNTPAGAPRLPGAPAPQVLP. Over residues 15 to 27 the composition is skewed to low complexity; sequence PAGAPRLPGAPAP. The active-site Proton acceptor is the Asp50. The active site involves Lys159. Residue Cys192 is the Nucleophile of the active site.

This sequence belongs to the isochorismatase family. RutB subfamily.

It carries out the reaction (Z)-3-ureidoacrylate + H2O + H(+) = (Z)-3-aminoacrylate + NH4(+) + CO2. The enzyme catalyses (Z)-3-ureidoacrylate + H2O = (Z)-3-aminoacrylate + carbamate + H(+). It catalyses the reaction (Z)-2-methylureidoacrylate + H2O + H(+) = (Z)-2-methylaminoacrylate + NH4(+) + CO2. Hydrolyzes ureidoacrylate to form aminoacrylate and carbamate. The carbamate hydrolyzes spontaneously, thereby releasing one of the nitrogen atoms of the pyrimidine ring as ammonia and one of its carbon atoms as CO2. This is Ureidoacrylate amidohydrolase RutB from Variovorax paradoxus (strain S110).